The sequence spans 83 residues: Exodeoxyribonuclease 7 small subunit (83 aa).

Residues 1-25 (MQDELFETEKAPPKNAKNAPKKSFE) form a disordered region.

This sequence belongs to the XseB family. In terms of assembly, heterooligomer composed of large and small subunits.

Its subcellular location is the cytoplasm. The enzyme catalyses Exonucleolytic cleavage in either 5'- to 3'- or 3'- to 5'-direction to yield nucleoside 5'-phosphates.. Its function is as follows. Bidirectionally degrades single-stranded DNA into large acid-insoluble oligonucleotides, which are then degraded further into small acid-soluble oligonucleotides. This Helicobacter pylori (strain P12) protein is Exodeoxyribonuclease 7 small subunit.